The sequence spans 481 residues: RAC-beta serine/threonine-protein kinase (481 aa).

Residue M1 is modified to N-acetylmethionine. Positions 5–108 constitute a PH domain; that stretch reads SVIKEGWLHK…WMRAIQMVAN (104 aa). S34 is modified (phosphoserine). C60 and C77 are joined by a disulfide. S126 carries the post-translational modification Phosphoserine. S128 and S131 each carry an O-linked (GlcNAc) serine glycan. The 258-residue stretch at 152-409 folds into the Protein kinase domain; it reads FDYLKLLGKG…AKEVMEHRFF (258 aa). Residues 158–166 and K181 contribute to the ATP site; that span reads LGKGTFGKV. D275 (proton acceptor) is an active-site residue. Mn(2+)-binding residues include N280 and D293. A disulfide bridge links C297 with C311. Residue T306 is glycosylated (O-linked (GlcNAc) threonine). Position 309 is a phosphothreonine; by PDPK1 (T309). T313 carries O-linked (GlcNAc) threonine glycosylation. The AGC-kinase C-terminal domain maps to 410–481; the sequence is LSINWQDVVQ…QFSYSASIRE (72 aa). S447 carries the phosphoserine modification. T451 bears the Phosphothreonine mark. Phosphoserine occurs at positions 474 and 478. The O-linked (GlcNAc) serine; alternate glycan is linked to S474.

Belongs to the protein kinase superfamily. AGC Ser/Thr protein kinase family. RAC subfamily. Interacts with BTBD10. Interacts with KCTD20. Interacts (via PH domain) with MTCP1, TCL1A and TCL1B; this interaction may facilitate AKT2 oligomerization and phosphorylation, hence increasing kinase activity. Interacts with PHB2; this interaction may be important for myogenic differentiation. Interacts (when phosphorylated) with CLIP3/ClipR-59; this interaction promotes AKT2 recruitment to the plasma membrane. Interacts with WDFY2/ProF (via WD repeats 1-3). Post-translationally, phosphorylation on Thr-309 and Ser-474 is required for full activity. Phosphorylation of the activation loop at Thr-309 by PDPK1/PDK1 is a prerequisite for full activation. Phosphorylated and activated by PDPK1/PDK1 in the presence of phosphatidylinositol 3,4,5-trisphosphate. Phosphorylation by mTORC2 in response to growth factors plays a key role in AKT1 activation: mTORC2 phosphorylates different sites depending on the context, such as Ser-474 or Ser-478, thereby facilitating subsequent phosphorylation of the activation loop by PDPK1/PDK1. In terms of processing, ubiquitinated; undergoes both 'Lys-48'- and 'Lys-63'-linked polyubiquitination. TRAF6 catalyzes 'Lys-63'-linked AKT2 ubiquitination; this modification may be important for AKT2 recruitment to the plasma membrane and for AKT2 activating phosphorylation. When phosphorylated, undergoes 'Lys-48'-polyubiquitination catalyzed by TTC3 in the nucleus, leading to its degradation by the proteasome. O-GlcNAcylation at Thr-306 and Thr-313 inhibits activating phosphorylation at Thr-309 via the disruption of the interaction between AKT and PDPK1/PDK1. As to expression, widely expressed. Expressed in myoblasts.

The protein localises to the cytoplasm. It localises to the nucleus. The protein resides in the cell membrane. It is found in the early endosome. It carries out the reaction L-seryl-[protein] + ATP = O-phospho-L-seryl-[protein] + ADP + H(+). The catalysed reaction is L-threonyl-[protein] + ATP = O-phospho-L-threonyl-[protein] + ADP + H(+). With respect to regulation, phosphorylation at Thr-309 (in the kinase domain) and Ser-474 (in the C-terminal regulatory region) is required for full activation. In adipocytes and hepatocytes, the activation is induced by insulin. Aminofurazans, such as 4-[2-(4-amino-2,5-dihydro-1,2,5-oxadiazol-3-yl)-6-{[(1S)-3-amino-1-phenylpropyl]oxy}-1-ethyl-1H-imidazo[4,5-c]pyridin-4-yl]-2-methylbut-3-yn-2-ol (compound 32), are potent AKT2 inhibitors. AKT2 phosphorylation of PKP1 is induced by insulin. Serine/threonine kinase closely related to AKT1 and AKT3. All 3 enzymes, AKT1, AKT2 and AKT3, are collectively known as AKT kinase. AKT regulates many processes including metabolism, proliferation, cell survival, growth and angiogenesis, through the phosphorylation of a range of downstream substrates. Over 100 substrates have been reported so far, although for most of them, the precise AKT kinase catalyzing the reaction was not specified. AKT regulates glucose uptake by mediating insulin-induced translocation of the SLC2A4/GLUT4 glucose transporter to the cell surface. Phosphorylation of PTPN1 at 'Ser-50' negatively modulates its phosphatase activity preventing dephosphorylation of the insulin receptor and the attenuation of insulin signaling. Phosphorylation of TBC1D4 triggers the binding of this effector to inhibitory 14-3-3 proteins, which is required for insulin-stimulated glucose transport. AKT also regulates the storage of glucose in the form of glycogen by phosphorylating GSK3A at 'Ser-21' and GSK3B at 'Ser-9', resulting in inhibition of its kinase activity. Phosphorylation of GSK3 isoforms by AKT is also thought to be one mechanism by which cell proliferation is driven. AKT also regulates cell survival via the phosphorylation of MAP3K5 (apoptosis signal-related kinase). Phosphorylation of 'Ser-83' decreases MAP3K5 kinase activity stimulated by oxidative stress and thereby prevents apoptosis. AKT mediates insulin-stimulated protein synthesis by phosphorylating TSC2 at 'Ser-939' and 'Thr-1462', thereby activating mTORC1 signaling and leading to both phosphorylation of 4E-BP1 and in activation of RPS6KB1. AKT is involved in the phosphorylation of members of the FOXO factors (Forkhead family of transcription factors), leading to binding of 14-3-3 proteins and cytoplasmic localization. In particular, FOXO1 is phosphorylated at 'Thr-24', 'Ser-256' and 'Ser-319'. FOXO3 and FOXO4 are phosphorylated on equivalent sites. AKT has an important role in the regulation of NF-kappa-B-dependent gene transcription and positively regulates the activity of CREB1 (cyclic AMP (cAMP)-response element binding protein). The phosphorylation of CREB1 induces the binding of accessory proteins that are necessary for the transcription of pro-survival genes such as BCL2 and MCL1. AKT phosphorylates 'Ser-454' on ATP citrate lyase (ACLY), thereby potentially regulating ACLY activity and fatty acid synthesis. Activates the 3B isoform of cyclic nucleotide phosphodiesterase (PDE3B) via phosphorylation of 'Ser-273', resulting in reduced cyclic AMP levels and inhibition of lipolysis. Phosphorylates PIKFYVE on 'Ser-318', which results in increased PI(3)P-5 activity. The Rho GTPase-activating protein DLC1 is another substrate and its phosphorylation is implicated in the regulation cell proliferation and cell growth. AKT plays a role as key modulator of the AKT-mTOR signaling pathway controlling the tempo of the process of newborn neurons integration during adult neurogenesis, including correct neuron positioning, dendritic development and synapse formation. Signals downstream of phosphatidylinositol 3-kinase (PI(3)K) to mediate the effects of various growth factors such as platelet-derived growth factor (PDGF), epidermal growth factor (EGF), insulin and insulin-like growth factor 1 (IGF1). AKT mediates the antiapoptotic effects of IGF1. Essential for the SPATA13-mediated regulation of cell migration and adhesion assembly and disassembly. May be involved in the regulation of the placental development. In response to lysophosphatidic acid stimulation, inhibits the ciliogenesis cascade. In this context, phosphorylates WDR44, hence stabilizing its interaction with Rab11 and preventing the formation of the ciliogenic Rab11-FIP3-RAB3IP complex. Also phosphorylates RAB3IP/Rabin8, thus may affect RAB3IP guanine nucleotide exchange factor (GEF) activity toward Rab8, which is important for cilia growth. Phosphorylates PKP1, facilitating its interaction with YWHAG and translocation to the nucleus, ultimately resulting in a reduction in keratinocyte intercellular adhesion. Phosphorylation of PKP1 increases PKP1 protein stability, translocation to the cytoplasm away from desmosome plaques and PKP1-driven cap-dependent translation. In terms of biological role, several AKT2-specific substrates have been identified, including ANKRD2, C2CD5, CLK2 and PITX2. May play a role in myoblast differentiation. In this context, may act through PITX2 phosphorylation. Unphosphorylated PITX2 associates with an ELAVL1/HuR-containing complex, which stabilizes CCND1 cyclin mRNA, ensuring cell proliferation. Phosphorylation by AKT2 impairs this association, leading to CCND1 mRNA destabilization and progression towards differentiation. Also involved in the negative regulation of myogenesis in response to stress conditions. In this context, acts by phosphorylating ANKRD2. May also be a key regulator of glucose uptake. Regulates insulin-stimulated glucose transport by the increase of glucose transporter GLUT4 translocation from intracellular stores to the plasma membrane. In this context, acts by phosphorylating C2CD5/CDP138 on 'Ser-197' in insulin-stimulated adipocytes. Through the phosphorylation of CLK2 on 'Thr-343', involved in insulin-regulated suppression of hepatic gluconeogenesis. The chain is RAC-beta serine/threonine-protein kinase from Homo sapiens (Human).